Reading from the N-terminus, the 584-residue chain is Complement component C8 alpha chain (584 aa).

A signal peptide spans 1 to 20; the sequence is MFAVVFFILSLMTCQPGVTA. Residues 21 to 30 constitute a propeptide that is removed on maturation; it reads QEKVNQRVRR. A TSP type-1 1 domain is found at 38-91; that stretch reads TCQLSNWSEWTDCFPCQDKKYRHRSLLQPNKFGGTICSGDIWDQASCSSSTTCV. 7 cysteine pairs are disulfide-bonded: C39–C74, C50–C84, C53–C90, C96–C108, C102–C121, C115–C130, and C140–C177. W44 is a glycosylation site (C-linked (Man) tryptophan). An LDL-receptor class A domain is found at 94 to 132; sequence AQCGQDFQCKETGRCLKRHLVCNGDQDCLDGSDEDDCED. 6 residues coordinate Ca(2+): L113, N116, D118, D120, D126, and E127. Residues 135 to 498 enclose the MACPF domain; sequence AIDEDCSQYE…QYLMEFNACR (364 aa). Beta stranded transmembrane passes span 248–256, 259–266, 377–384, and 390–395; these read FGVTIGIGP, SPLLVGVG, GGSLGIQY, and VGGGLS. Cysteines 375 and 399 form a disulfide. A glycan (N-linked (GlcNAc...) asparagine) is linked at N437. Disulfide bonds link C497–C544, C499–C515, C502–C517, and C519–C528. In terms of domain architecture, EGF-like spans 499–529; sequence CGPCFNNGVPILEGTSCRCQCRLGSLGAACE. Residues 539-583 form the TSP type-1 2 domain; that stretch reads DGSWSCWSSWSVCRAGIQERRRECDNPAPQNGGASCPGRKVQTQA. 3 C-linked (Man) tryptophan glycosylation sites follow: W542, W545, and W548. Cystine bridges form between C551-C584 and C562-C574. The segment at 562 to 584 is disordered; that stretch reads CDNPAPQNGGASCPGRKVQTQAC.

This sequence belongs to the complement C6/C7/C8/C9 family. As to quaternary structure, heterotrimer of 3 chains: alpha (C8A), beta (C8B) and gamma (C8G); the alpha and gamma chains are disulfide bonded. Component of the membrane attack complex (MAC), composed of complement C5b, C6, C7, C8A, C8B, C8G and multiple copies of the pore-forming subunit C9.

The protein resides in the secreted. It is found in the target cell membrane. Its activity is regulated as follows. Membrane attack complex (MAC) assembly is inhibited by CD59, thereby protecting self-cells from damage during complement activation. CD59 acts by binding to the beta-haipins of C8 (C8A and C8B), forming an intermolecular beta-sheet that prevents incorporation of the multiple copies of C9 required for complete formation of the osmolytic pore. MAC assembly is also inhibited by clusterin (CLU) chaperones that inhibit polymerization of C9. In terms of biological role, component of the membrane attack complex (MAC), a multiprotein complex activated by the complement cascade, which inserts into a target cell membrane and forms a pore, leading to target cell membrane rupture and cell lysis. The MAC is initiated by proteolytic cleavage of C5 into complement C5b in response to the classical, alternative, lectin and GZMK complement pathways. The complement pathways consist in a cascade of proteins that leads to phagocytosis and breakdown of pathogens and signaling that strengthens the adaptive immune system. C8A, together with C8B and C8G, inserts into the target membrane, but does not form pores by itself. During MAC assembly, associates with C5b, C6 and C7 to form the C5b8 intermediate complex that inserts into the target membrane and traverses the bilayer increasing membrane rigidity. The sequence is that of Complement component C8 alpha chain from Homo sapiens (Human).